We begin with the raw amino-acid sequence, 430 residues long: Small ribosomal subunit protein uS5m (430 aa).

In terms of domain architecture, S5 DRBM spans phenylalanine 218–isoleucine 282.

It belongs to the universal ribosomal protein uS5 family. Component of the mitochondrial small ribosomal subunit (mt-SSU). Mature mammalian 55S mitochondrial ribosomes consist of a small (28S) and a large (39S) subunit. The 28S small subunit contains a 12S ribosomal RNA (12S mt-rRNA) and 30 different proteins. The 39S large subunit contains a 16S rRNA (16S mt-rRNA), a copy of mitochondrial valine transfer RNA (mt-tRNA(Val)), which plays an integral structural role, and 52 different proteins.

The protein localises to the mitochondrion. The sequence is that of Small ribosomal subunit protein uS5m (MRPS5) from Homo sapiens (Human).